A 429-amino-acid chain; its full sequence is Ribosomal RNA small subunit methyltransferase B (429 aa).

Residues 254 to 260, aspartate 277, aspartate 303, and aspartate 322 each bind S-adenosyl-L-methionine; that span reads CAAPGGK. The active-site Nucleophile is cysteine 375. The tract at residues 397–419 is disordered; it reads ALSETGTPDQPGQQNLPGGEEGD. Residues 400 to 412 are compositionally biased toward polar residues; the sequence is ETGTPDQPGQQNL.

This sequence belongs to the class I-like SAM-binding methyltransferase superfamily. RsmB/NOP family.

It is found in the cytoplasm. It carries out the reaction cytidine(967) in 16S rRNA + S-adenosyl-L-methionine = 5-methylcytidine(967) in 16S rRNA + S-adenosyl-L-homocysteine + H(+). Functionally, specifically methylates the cytosine at position 967 (m5C967) of 16S rRNA. The polypeptide is Ribosomal RNA small subunit methyltransferase B (Salmonella heidelberg (strain SL476)).